The primary structure comprises 489 residues: Cytochrome P450 monooxygenase bfoB (489 aa).

Positions 1-18 (MLALYLIAGLLVGLLVYR) are cleaved as a signal peptide. N-linked (GlcNAc...) asparagine glycosylation is found at Asn113, Asn348, and Asn386. Cys429 contacts heme.

It belongs to the cytochrome P450 family. Requires heme as cofactor.

It carries out the reaction 2 fonsecin B + NADPH + O2 + H(+) = bifonsecin B + NADP(+) + 2 H2O. The catalysed reaction is 2 rubrofusarin B + NADPH + O2 + 3 H(+) = nigerone + NADP(+) + 2 H2O. It participates in secondary metabolite biosynthesis. Functionally, cytochrome P450 monooxygenase; part of the gene cluster that mediates the biosynthesis of bifonsecin B, a dimeric gamma-naphthopyrone. The first step in the biosynthesis of bifonsecin B is the production of gamma-naphthopyrone precursor YWA1 by the non-reducing polyketide synthase albA, via condensation of one acetyl-CoA starter unit with 6 malonyl-CoA units. YWA1 is then methylated by bfoE at position C-6 to yield foncesin which is further methylated at position C-8 by bfoD to produce fonsecin B. A key enzyme in the biosynthetic pathway is the cytochrome P450 monooxygenase bfoB which catalyzes the oxidative dimerization of fonsecin B to bifonsecin B. Bfob also catalyzes the oxidative dimerization of rubrofusarin B into nigerone. The stereoselectivity of bfoB is influenced by the two natural monomeric substrates; homodimerization of fonsecin B yields a stereochemically pure biaryl, M-foncerine B, while rubrofusarin B yields a mixture of enantiomers M- and P-nigerone. The protein is Cytochrome P450 monooxygenase bfoB of Aspergillus brasiliensis (strain CBS 101740 / IMI 381727 / IBT 21946).